Reading from the N-terminus, the 536-residue chain is MLRVHRLYSTRGAAEVLHAAPKYALRCGLEIHTQLNTRNKLFSLSTNDPFQAAATPNYHTSFFDISLPGTQPRLNYEAVLYAIKLSLALDCRVNLKSQFDRKHYFYGDQPLGYQITQHYNPIAKDGKLCLYGAYDNIPEDEKTIGIIQLQLEQDTGRSLYKDTDGMTLIDLNRSNVPLVEMVTQPDFTDVKQVRAFVKKYQNLVRHLNISTGDLETGAMRVDVNMSVNGHARVELKNLPNTSSITNAIRYEYQRQVDIIRSGQADKMLKDVETRGWTGSATIKLRSKESTIDYRYMPDPEIPVLLLEPEVVHRVATALPELPDQTLRKLMAEPYNLSLKDAKILTTNSNSHGNFYTHHDLRNYFMKTFQLFTAKTGASNSKLPANWIIHELLGIINKLEIPLPKILQLLPASHFAEFLALIHDNELSKSSAKLLLFHIINDFKESHCSNLALPDFRLLIEQYNLNPLNEVEEHALTELCQYVLRELNDDALVADLVSGKKKNALKFLLGKGMRLSQGKVDPALLEGAFKSVLGIKW.

Residues 1–8 (MLRVHRLY) constitute a mitochondrion transit peptide.

This sequence belongs to the GatB/GatE family. GatB subfamily. As to quaternary structure, subunit of the heterotrimeric GatFAB amidotransferase (AdT) complex, composed of A, B and F subunits.

Its subcellular location is the mitochondrion. The catalysed reaction is L-glutamyl-tRNA(Gln) + L-glutamine + ATP + H2O = L-glutaminyl-tRNA(Gln) + L-glutamate + ADP + phosphate + H(+). In terms of biological role, allows the formation of correctly charged Gln-tRNA(Gln) through the transamidation of misacylated Glu-tRNA(Gln) in the mitochondria. The reaction takes place in the presence of glutamine and ATP through an activated gamma-phospho-Glu-tRNA(Gln). The polypeptide is Glutamyl-tRNA(Gln) amidotransferase subunit B, mitochondrial (Eremothecium gossypii (strain ATCC 10895 / CBS 109.51 / FGSC 9923 / NRRL Y-1056) (Yeast)).